The primary structure comprises 471 residues: RNA N(6)-adenosine-methyltransferase mettl16 (471 aa).

The segment at 17–20 is RNA-binding; that stretch reads PPDF. 6 residues coordinate S-adenosyl-L-methionine: Arg-82, Gly-106, Ser-110, Glu-129, Thr-160, and Asn-179. Residues 159–163 form a K-loop region; the sequence is KTLLM. 3 RNA-binding regions span residues 194 to 206, 245 to 249, and 272 to 278; these read SRNS…SSIN, GKKCS, and QGRTMRW. 2 VCR regions span residues 284–390 and 421–470; these read FYDD…RAQE and FLFK…VAKP. The tract at residues 375 to 412 is disordered; it reads RREQGRHLRELPRAQEPPSEETSVTEQQQQPDIPPESP.

It belongs to the methyltransferase superfamily. METTL16/RlmF family.

The protein resides in the nucleus. The protein localises to the cytoplasm. The enzyme catalyses adenosine in U6 snRNA + S-adenosyl-L-methionine = N(6)-methyladenosine in U6 snRNA + S-adenosyl-L-homocysteine + H(+). The catalysed reaction is an adenosine in mRNA + S-adenosyl-L-methionine = an N(6)-methyladenosine in mRNA + S-adenosyl-L-homocysteine + H(+). Its activity is regulated as follows. Methyltransferase activity is autoinhibited by the K-loop region that blocks S-adenosyl-L-methionine-binding. Upon activation, K-loop changes conformation, allowing S-adenosyl-L-methionine-binding and subsequent methyltransferase activity. mRNA N6-adenosine-methyltransferase activity is inhibited by zinc. In terms of biological role, RNA N6-methyltransferase that methylates adenosine residues at the N(6) position of a subset of RNAs and is involved in S-adenosyl-L-methionine homeostasis by regulating expression of MAT2A transcripts. Able to N6-methylate a subset of mRNAs and U6 small nuclear RNAs (U6 snRNAs). In contrast to the METTL3-METTL14 heterodimer, only able to methylate a limited number of RNAs: requires both a 5'UACAGAGAA-3' nonamer sequence and a specific RNA structure. Plays a key role in S-adenosyl-L-methionine homeostasis by mediating N6-methylation of MAT2A mRNAs, altering splicing of MAT2A transcripts: in presence of S-adenosyl-L-methionine, binds the 3'-UTR region of MAT2A mRNA and specifically N6-methylates the first hairpin of MAT2A mRNA, impairing MAT2A splicing and protein expression. In S-adenosyl-L-methionine-limiting conditions, binds the 3'-UTR region of MAT2A mRNA but stalls due to the lack of a methyl donor, preventing N6-methylation and promoting expression of MAT2A. In addition to mRNAs, also able to mediate N6-methylation of U6 small nuclear RNA (U6 snRNA): specifically N6-methylates adenine in position 43 of U6 snRNAs. This chain is RNA N(6)-adenosine-methyltransferase mettl16 (mettl16), found in Danio rerio (Zebrafish).